Reading from the N-terminus, the 273-residue chain is Probable cysteine-rich repeat secretory protein 6 (273 aa).

The N-terminal stretch at 1–21 is a signal peptide; the sequence is MTRIIDVSLFCFFLFSLGAMS. Gnk2-homologous domains are found at residues 22 to 122 and 128 to 241; these read QPSQ…DNSF and DSPA…ISAL.

Belongs to the cysteine-rich repeat secretory protein family.

It is found in the secreted. This is Probable cysteine-rich repeat secretory protein 6 (CRRSP6) from Arabidopsis thaliana (Mouse-ear cress).